Reading from the N-terminus, the 808-residue chain is Sucrose synthase isoform 1 (808 aa).

The segment at 277 to 754 (MVFNVVILSP…GLKRIQEKYT (478 aa)) is GT-B glycosyltransferase.

This sequence belongs to the glycosyltransferase 1 family. Plant sucrose synthase subfamily. As to quaternary structure, homotetramer. As to expression, expressed in stems, in roots at different developmental stages, and in flower buds, flowers and maturing seeds, with the highest levels in strong utilization sinks for sucrose such as growing stems and tap root tips.

The catalysed reaction is an NDP-alpha-D-glucose + D-fructose = a ribonucleoside 5'-diphosphate + sucrose + H(+). With respect to regulation, fructose acts as a non-competitive inhibitor with an inhibition constant of 17.2 mM. In contrast, glucose inhibits uncompetitively with an inhibition constant of 4.3 mM. Sucrose-cleaving enzyme that provides UDP-glucose and fructose for various metabolic pathways. This Daucus carota (Wild carrot) protein is Sucrose synthase isoform 1.